The following is a 201-amino-acid chain: Dephospho-CoA kinase (201 aa).

The DPCK domain occupies 2-201 (MIGLTGGIAS…KRWKVIPEDQ (200 aa)). 10-15 (ASGKSS) lines the ATP pocket.

The protein belongs to the CoaE family.

It is found in the cytoplasm. The enzyme catalyses 3'-dephospho-CoA + ATP = ADP + CoA + H(+). The protein operates within cofactor biosynthesis; coenzyme A biosynthesis; CoA from (R)-pantothenate: step 5/5. Its function is as follows. Catalyzes the phosphorylation of the 3'-hydroxyl group of dephosphocoenzyme A to form coenzyme A. The protein is Dephospho-CoA kinase of Halalkalibacterium halodurans (strain ATCC BAA-125 / DSM 18197 / FERM 7344 / JCM 9153 / C-125) (Bacillus halodurans).